A 200-amino-acid chain; its full sequence is MLPANRAEHSSDAEPRDIGSHGRNHGGCYSSDCKLGLLVDISNVVSPLPLDLTWSSWETTSQPARSRSYLNTRTYTIRACCDLQTRLHAFFIGVFEKRDPEKQILLPDLTNFKCILNNPRIMQELATEHSVCSAPFSAATQYDCDEDGEESTINGLCFHCHCKTPFSLECWQAANSAQAKILSVARGITSAKERQRENKR.

Residues 1–20 (MLPANRAEHSSDAEPRDIGS) show a composition bias toward basic and acidic residues. The interval 1-23 (MLPANRAEHSSDAEPRDIGSHGR) is disordered.

The protein belongs to the alphaherpesvirinae HHV-1 UL55 family.

The protein localises to the virion tegument. Its subcellular location is the host nucleus matrix. This is Tegument protein UL55 homolog from Equine herpesvirus 1 (strain Ab4p) (EHV-1).